A 276-amino-acid chain; its full sequence is Dermonecrotic toxin LvSicTox-alphaII1 (276 aa).

His5 is an active-site residue. Mg(2+) contacts are provided by Glu25 and Asp27. Residue His41 is the Nucleophile of the active site. 2 disulfides stabilise this stretch: Cys45/Cys51 and Cys47/Cys193. A Mg(2+)-binding site is contributed by Asp85.

It belongs to the arthropod phospholipase D family. Class II subfamily. The cofactor is Mg(2+). Expressed by the venom gland.

Its subcellular location is the secreted. It carries out the reaction an N-(acyl)-sphingosylphosphocholine = an N-(acyl)-sphingosyl-1,3-cyclic phosphate + choline. The catalysed reaction is an N-(acyl)-sphingosylphosphoethanolamine = an N-(acyl)-sphingosyl-1,3-cyclic phosphate + ethanolamine. The enzyme catalyses a 1-acyl-sn-glycero-3-phosphocholine = a 1-acyl-sn-glycero-2,3-cyclic phosphate + choline. It catalyses the reaction a 1-acyl-sn-glycero-3-phosphoethanolamine = a 1-acyl-sn-glycero-2,3-cyclic phosphate + ethanolamine. In terms of biological role, dermonecrotic toxins cleave the phosphodiester linkage between the phosphate and headgroup of certain phospholipids (sphingolipid and lysolipid substrates), forming an alcohol (often choline) and a cyclic phosphate. This toxin acts on sphingomyelin (SM). It may also act on ceramide phosphoethanolamine (CPE), lysophosphatidylcholine (LPC) and lysophosphatidylethanolamine (LPE), but not on lysophosphatidylserine (LPS), and lysophosphatidylglycerol (LPG). It acts by transphosphatidylation, releasing exclusively cyclic phosphate products as second products. Induces dermonecrosis, hemolysis, increased vascular permeability, edema, inflammatory response, and platelet aggregation. The chain is Dermonecrotic toxin LvSicTox-alphaII1 from Loxosceles variegata (Recluse spider).